Reading from the N-terminus, the 65-residue chain is Small ribosomal subunit protein bS21 (65 aa).

It belongs to the bacterial ribosomal protein bS21 family.

The sequence is that of Small ribosomal subunit protein bS21 from Chlorobium limicola (strain DSM 245 / NBRC 103803 / 6330).